A 225-amino-acid chain; its full sequence is Insulin-induced gene 2 protein (225 aa).

Residues 1–28 lie on the Cytoplasmic side of the membrane; it reads MAEGETESPRPKKRGPYISSVTSQSVNV. The helical transmembrane segment at 29-51 threads the bilayer; that stretch reads VIRGVVLFFIGVFLALVLNLLQI. Residues 52-70 are Lumenal-facing; sequence QRNVTLFPPDVITSIFSSA. Residues 71 to 88 traverse the membrane as a helical segment; the sequence is WWVPPCCGTASAVIGLLY. The Cytoplasmic segment spans residues 89-103; sequence PCIDRHLGEPHKFKR. A helical transmembrane segment spans residues 104–126; that stretch reads EWSSVMRCVAVFVGINHASAKVD. Over 127 to 129 the chain is Lumenal; that stretch reads FDN. A helical membrane pass occupies residues 130-148; that stretch reads NFQFSLTLAALSVGLWWTF. At 149–153 the chain is on the cytoplasmic side; sequence DRSRS. Phosphoserine is present on serine 151. The helical transmembrane segment at 154 to 175 threads the bilayer; sequence GFGLGVGIAFLATVVTQLLVYN. Residues 176 to 189 lie on the Lumenal side of the membrane; the sequence is GVYQYTSPDFLYVR. The chain crosses the membrane as a helical span at residues 190–207; that stretch reads SWLPCIFFAGGITMGNIG. Residues 208 to 225 are Cytoplasmic-facing; it reads RQLAMYECKVIAEKSHQE. The residue at position 215 (cysteine 215) is a Cysteine sulfenic acid (-SOH); alternate. A Glycyl cysteine thioester (Cys-Gly) (interchain with G-Cter in ubiquitin); alternate cross-link involves residue cysteine 215. The KxHxx signature appears at 219–225; that stretch reads AEKSHQE.

This sequence belongs to the INSIG family. Interacts with SCAP; interaction is direct and only takes place in the presence of sterols; it prevents interaction between SCAP and the coat protein complex II (COPII). Associates with the SCAP-SREBP complex (composed of SCAP and SREBF1/SREBP1 or SREBF2/SREBP2); association is mediated via its interaction with SCAP and only takes place in the presence of sterols. Interacts with RNF139. Interacts with RNF145. Phosphorylation at Ser-151 by PCK1 reduces binding to oxysterol, disrupting the interaction between INSIG2 and SCAP, thereby promoting nuclear translocation of SREBP proteins (SREBF1/SREBP1 or SREBF2/SREBP2) and subsequent transcription of downstream lipogenesis-related genes. In terms of processing, polyubiquitinated by AMFR/gp78 at Cys-215 in some tissues such as adipose tissues, undifferentiated myoblasts and liver, leading to its degradation. In differentiated myotubes, Cys-215 oxidation prevents ubiquitination at the same site, resulting in protein stabilization. Post-translationally, oxidized at Cys-215 in differentiated myotubes, preventing ubiquitination at the same site, and resulting in protein stabilization.

The protein resides in the endoplasmic reticulum membrane. Functionally, oxysterol-binding protein that mediates feedback control of cholesterol synthesis by controlling both endoplasmic reticulum to Golgi transport of SCAP and degradation of HMGCR. Acts as a negative regulator of cholesterol biosynthesis by mediating the retention of the SCAP-SREBP complex in the endoplasmic reticulum, thereby blocking the processing of sterol regulatory element-binding proteins (SREBPs) SREBF1/SREBP1 and SREBF2/SREBP2. Binds oxysterol, including 22-hydroxycholesterol, 24-hydroxycholesterol, 25-hydroxycholesterol and 27-hydroxycholesterol, regulating interaction with SCAP and retention of the SCAP-SREBP complex in the endoplasmic reticulum. In presence of oxysterol, interacts with SCAP, retaining the SCAP-SREBP complex in the endoplasmic reticulum, thereby preventing SCAP from escorting SREBF1/SREBP1 and SREBF2/SREBP2 to the Golgi. Sterol deprivation or phosphorylation by PCK1 reduce oxysterol-binding, disrupting the interaction between INSIG2 and SCAP, thereby promoting Golgi transport of the SCAP-SREBP complex, followed by processing and nuclear translocation of SREBF1/SREBP1 and SREBF2/SREBP2. Also regulates cholesterol synthesis by regulating degradation of HMGCR: initiates the sterol-mediated ubiquitin-mediated endoplasmic reticulum-associated degradation (ERAD) of HMGCR via recruitment of the reductase to the ubiquitin ligase RNF139. The sequence is that of Insulin-induced gene 2 protein from Rattus norvegicus (Rat).